The primary structure comprises 382 residues: Protein-arginine rhamnosyltransferase (382 aa).

DTDP-beta-L-rhamnose contacts are provided by residues asparagine 17 to aspartate 20, tyrosine 187, glutamine 252, and arginine 268 to serine 272. Aspartate 20 (proton acceptor) is an active-site residue. The active site involves glutamate 270.

Belongs to the glycosyltransferase 104 family.

The enzyme catalyses dTDP-beta-L-rhamnose + L-arginyl-[protein] = N(omega)-(alpha-L-rhamnosyl)-L-arginyl-[protein] + dTDP + H(+). Protein-arginine rhamnosyltransferase that catalyzes the transfer of a single rhamnose to elongation factor P (EF-P) on 'Lys-32', a modification required for EF-P-dependent rescue of polyproline stalled ribosomes. In Neisseria meningitidis, this protein is Protein-arginine rhamnosyltransferase.